We begin with the raw amino-acid sequence, 338 residues long: Tryptophan--tRNA ligase (338 aa).

ATP-binding positions include 12-14 (QPT) and 20-21 (GN). The 'HIGH' region signature appears at 13–21 (PTGDLHIGN). Asp136 lines the L-tryptophan pocket. Residues 148–150 (GED), Ile191, and 200–204 (KMSKS) contribute to the ATP site. The 'KMSKS' region signature appears at 200-204 (KMSKS).

This sequence belongs to the class-I aminoacyl-tRNA synthetase family. As to quaternary structure, homodimer.

It is found in the cytoplasm. It carries out the reaction tRNA(Trp) + L-tryptophan + ATP = L-tryptophyl-tRNA(Trp) + AMP + diphosphate + H(+). Functionally, catalyzes the attachment of tryptophan to tRNA(Trp). This chain is Tryptophan--tRNA ligase, found in Prochlorococcus marinus subsp. pastoris (strain CCMP1986 / NIES-2087 / MED4).